Reading from the N-terminus, the 156-residue chain is Histone acetyltransferase HPA2 (156 aa).

The 148-residue stretch at 9 to 156 (ITVRFVTEND…PKILYKRKGY (148 aa)) folds into the N-acetyltransferase domain. 93 to 106 (LYVDENSRVKGAGG) is a binding site for acetyl-CoA.

Belongs to the acetyltransferase family. GNAT subfamily. Forms homodimers in the absence, and homotetramers in the presence of acetyl-CoA. Post-translationally, autoacetylates in an intermolecular reaction.

It carries out the reaction L-lysyl-[protein] + acetyl-CoA = N(6)-acetyl-L-lysyl-[protein] + CoA + H(+). Functionally, N-acetyltransferase that acetylates histone H3 at 'Lys-14' and histone H4 at 'Lys-5' and 'Lys-12'. Also acetylates polyamines like putrescine, spermidine and spermine, and certain other small basic proteins like nuclear HMG proteins. The polypeptide is Histone acetyltransferase HPA2 (Saccharomyces cerevisiae (strain ATCC 204508 / S288c) (Baker's yeast)).